A 219-amino-acid polypeptide reads, in one-letter code: Thiamine-phosphate synthase (219 aa).

Residues 44–48 and Asn79 contribute to the 4-amino-2-methyl-5-(diphosphooxymethyl)pyrimidine site; that span reads QLREK. Mg(2+) is bound by residues Asp80 and Asp99. Ser117 lines the 4-amino-2-methyl-5-(diphosphooxymethyl)pyrimidine pocket. 143–145 contacts 2-[(2R,5Z)-2-carboxy-4-methylthiazol-5(2H)-ylidene]ethyl phosphate; sequence TST. Residue Lys146 coordinates 4-amino-2-methyl-5-(diphosphooxymethyl)pyrimidine. 2-[(2R,5Z)-2-carboxy-4-methylthiazol-5(2H)-ylidene]ethyl phosphate contacts are provided by residues Gly175 and 195 to 196; that span reads IS.

The protein belongs to the thiamine-phosphate synthase family. The cofactor is Mg(2+).

The enzyme catalyses 2-[(2R,5Z)-2-carboxy-4-methylthiazol-5(2H)-ylidene]ethyl phosphate + 4-amino-2-methyl-5-(diphosphooxymethyl)pyrimidine + 2 H(+) = thiamine phosphate + CO2 + diphosphate. It catalyses the reaction 2-(2-carboxy-4-methylthiazol-5-yl)ethyl phosphate + 4-amino-2-methyl-5-(diphosphooxymethyl)pyrimidine + 2 H(+) = thiamine phosphate + CO2 + diphosphate. The catalysed reaction is 4-methyl-5-(2-phosphooxyethyl)-thiazole + 4-amino-2-methyl-5-(diphosphooxymethyl)pyrimidine + H(+) = thiamine phosphate + diphosphate. The protein operates within cofactor biosynthesis; thiamine diphosphate biosynthesis; thiamine phosphate from 4-amino-2-methyl-5-diphosphomethylpyrimidine and 4-methyl-5-(2-phosphoethyl)-thiazole: step 1/1. Its function is as follows. Condenses 4-methyl-5-(beta-hydroxyethyl)thiazole monophosphate (THZ-P) and 2-methyl-4-amino-5-hydroxymethyl pyrimidine pyrophosphate (HMP-PP) to form thiamine monophosphate (TMP). The chain is Thiamine-phosphate synthase from Bacillus mycoides (strain KBAB4) (Bacillus weihenstephanensis).